The primary structure comprises 132 residues: Large ribosomal subunit protein bL19 (132 aa).

This sequence belongs to the bacterial ribosomal protein bL19 family.

This protein is located at the 30S-50S ribosomal subunit interface and may play a role in the structure and function of the aminoacyl-tRNA binding site. This is Large ribosomal subunit protein bL19 from Maricaulis maris (strain MCS10) (Caulobacter maris).